Consider the following 479-residue polypeptide: D-hydantoinase/dihydropyrimidinase (479 aa).

Zn(2+) is bound by residues His-59, His-61, and Lys-150. N6-carboxylysine is present on Lys-150. Tyr-155 is a substrate binding site. The Zn(2+) site is built by His-183 and His-239. Position 289 (Ser-289) interacts with substrate. Asp-316 serves as a coordination point for Zn(2+). Residue Asn-337 participates in substrate binding.

The protein belongs to the metallo-dependent hydrolases superfamily. Hydantoinase/dihydropyrimidinase family. Homotetramer. Zn(2+) serves as cofactor. In terms of processing, carboxylation allows a single lysine to coordinate two zinc ions.

It carries out the reaction 5,6-dihydrouracil + H2O = 3-(carbamoylamino)propanoate + H(+). In terms of biological role, catalyzes the hydrolysis of dihydropyrimidines and of the structurally related DL-5-mono-substituted hydantoins, to produce N-carbamoyl-D-amino acids. This chain is D-hydantoinase/dihydropyrimidinase (dht), found in Pseudomonas aeruginosa (strain ATCC 15692 / DSM 22644 / CIP 104116 / JCM 14847 / LMG 12228 / 1C / PRS 101 / PAO1).